The chain runs to 1417 residues: Non-structural polyprotein 1AB (1417 aa).

A coiled-coil region spans residues Lys-105–Glu-143. 5 helical membrane-spanning segments follow: residues Met-155–Ala-175, Val-240–Gly-260, Val-287–Val-307, Leu-314–Met-334, and Gly-345–Thr-365. Residues His-462, Asp-490, and Ser-552 each act as charge relay system; for serine protease activity in the active site. Residues Val-588–Pro-615 are a coiled coil. Position 694 is an O-(5'-phospho-RNA)-tyrosine (Tyr-694). The interval Asn-753–Gln-813 is disordered. The span at Ser-784–Gln-796 shows a compositional bias: basic and acidic residues. One can recognise a RdRp catalytic domain in the interval Lys-1162–Glu-1288.

This sequence belongs to the astroviridae polyprotein 1AB family. In terms of assembly, monomer. Post-translationally, cleaved by the viral and host proteases. The protease is probably autocatalytically cleaved.

The protein resides in the host membrane. The enzyme catalyses RNA(n) + a ribonucleoside 5'-triphosphate = RNA(n+1) + diphosphate. Responsible for the cleavage of the polyprotein into functional products. Its function is as follows. Protein covalently attached to the 5' extremity of the genomic and subgenomic RNAs. It may serve as a primer for the replicase. This Human astrovirus-8 (HAstV-8) protein is Non-structural polyprotein 1AB (ORF1).